Consider the following 269-residue polypeptide: Shikimate dehydrogenase (NADP(+)) (269 aa).

Shikimate contacts are provided by residues 15–17 (SLS) and Thr62. The active-site Proton acceptor is Lys66. Residues Asn86 and Asp100 each coordinate shikimate. NADP(+)-binding positions include 124–128 (GAGGA), 147–152 (NRTPER), and Ile211. Tyr213 lines the shikimate pocket. Gly234 provides a ligand contact to NADP(+).

Belongs to the shikimate dehydrogenase family. As to quaternary structure, homodimer.

It catalyses the reaction shikimate + NADP(+) = 3-dehydroshikimate + NADPH + H(+). It functions in the pathway metabolic intermediate biosynthesis; chorismate biosynthesis; chorismate from D-erythrose 4-phosphate and phosphoenolpyruvate: step 4/7. Involved in the biosynthesis of the chorismate, which leads to the biosynthesis of aromatic amino acids. Catalyzes the reversible NADPH linked reduction of 3-dehydroshikimate (DHSA) to yield shikimate (SA). In Methanococcoides burtonii (strain DSM 6242 / NBRC 107633 / OCM 468 / ACE-M), this protein is Shikimate dehydrogenase (NADP(+)).